Here is a 701-residue protein sequence, read N- to C-terminus: Ephexin-1 (701 aa).

Basic and acidic residues-rich tracts occupy residues 1 to 11 (METKNSEDQGK) and 26 to 48 (GPAE…EEPR). Residues 1 to 141 (METKNSEDQG…TPEECPALTD (141 aa)) form a disordered region. Residues 1–264 (METKNSEDQG…LDILQPEETK (264 aa)) are regulatory region; modulates activity toward RHOA, RAC1 and CDC42. Residues 120-132 (ASESSSTPGNGTT) show a composition bias toward polar residues. At tyrosine 172 the chain carries Phosphotyrosine. Residues 187–226 (RRQQDAEIQGNSDGSQAGEDNAEEEEEEEEEPASPPERRA) form a disordered region. The span at 206 to 218 (DNAEEEEEEEEEP) shows a compositional bias: acidic residues. The DH domain occupies 264 to 448 (KLQEAMFELV…EMVVKACNEG (185 aa)). The region spanning 480–592 (WLLKQGELQQ…WMTSLAPNRR (113 aa)) is the PH domain. Residues 603-664 (LDCPQVQCVH…PSSMTEEILN (62 aa)) form the SH3 domain. Positions 679–690 (HKMEDPQRSQNK) are enriched in basic and acidic residues. The tract at residues 679–701 (HKMEDPQRSQNKDRRKLGSRNRQ) is disordered. Positions 691–701 (DRRKLGSRNRQ) are enriched in basic residues.

As to quaternary structure, interacts with CDK5R1 and EPHA4; activated by EPHA4 through the CDK5 kinase. In terms of processing, phosphorylation by CDK5 upon EPHA4 activation by EFNA1 may regulate dendritic spine morphogenesis. Src-dependent phosphorylation at Tyr-172 upon EPHA4 activation increases the guanine exchange factor activity toward RHOA. As to expression, expressed in telencephalic neurons (at protein level). Expressed in brain, spinal cord and testis.

The protein resides in the cytoplasm. It localises to the membrane. It is found in the cell projection. Its subcellular location is the growth cone. Acts as a guanine nucleotide exchange factor (GEF) which differentially activates the GTPases RHOA, RAC1 and CDC42. Plays a role in axon guidance regulating ephrin-induced growth cone collapse and dendritic spine morphogenesis. Upon activation by ephrin through EPHA4, the GEF activity switches toward RHOA resulting in its activation. Activated RHOA promotes cone retraction at the expense of RAC1- and CDC42-stimulated growth cone extension. The chain is Ephexin-1 (Ngef) from Rattus norvegicus (Rat).